The following is a 582-amino-acid chain: ATP-dependent lipid A-core flippase (582 aa).

Transmembrane regions (helical) follow at residues 16–36 (LWPTIAPFKAGLIVAGVALIL), 63–83 (VLVWMPLVVIGLMILRGITSY), 153–173 (IIGLFIMMFYYSWQLSIILIV), 253–273 (PIIQLIASLALAFVLYAASFP), and 275–295 (VMDNLTAGTITVVFSSMIALM). The ABC transmembrane type-1 domain occupies 28–310 (IVAGVALILN…LTNVNAQFQR (283 aa)). The ABC transporter domain maps to 342–578 (VEFRNVTFTY…RGVYAQLHKM (237 aa)). 376 to 383 (GRSGSGKS) provides a ligand contact to ATP.

This sequence belongs to the ABC transporter superfamily. Lipid exporter (TC 3.A.1.106) family. In terms of assembly, homodimer.

It localises to the cell inner membrane. The enzyme catalyses ATP + H2O + lipid A-core oligosaccharideSide 1 = ADP + phosphate + lipid A-core oligosaccharideSide 2.. Its function is as follows. Involved in lipopolysaccharide (LPS) biosynthesis. Translocates lipid A-core from the inner to the outer leaflet of the inner membrane. Transmembrane domains (TMD) form a pore in the inner membrane and the ATP-binding domain (NBD) is responsible for energy generation. This is ATP-dependent lipid A-core flippase from Shigella flexneri.